Here is a 103-residue protein sequence, read N- to C-terminus: UPF0132 membrane protein AF_0105 (103 aa).

The next 3 membrane-spanning stretches (helical) occupy residues 5–25 (VAGALSYLLGPITGILFLLME), 35–55 (AMQSTITFAGFWVLDIALSFI), and 58–78 (IGVLLIPIVGLVAFITWLVCI).

This sequence belongs to the UPF0132 family.

Its subcellular location is the cell membrane. In Archaeoglobus fulgidus (strain ATCC 49558 / DSM 4304 / JCM 9628 / NBRC 100126 / VC-16), this protein is UPF0132 membrane protein AF_0105.